Reading from the N-terminus, the 110-residue chain is Eukaryotic translation initiation factor eIF1 (110 aa).

The protein belongs to the SUI1 family.

In terms of biological role, probably involved in translation. The sequence is that of Eukaryotic translation initiation factor eIF1 from Anopheles gambiae (African malaria mosquito).